We begin with the raw amino-acid sequence, 273 residues long: Hydroxyethylthiazole kinase (273 aa).

Methionine 41 contacts substrate. Residues arginine 117 and threonine 170 each contribute to the ATP site. Residue glycine 197 coordinates substrate.

Belongs to the Thz kinase family. The cofactor is Mg(2+).

The enzyme catalyses 5-(2-hydroxyethyl)-4-methylthiazole + ATP = 4-methyl-5-(2-phosphooxyethyl)-thiazole + ADP + H(+). Its pathway is cofactor biosynthesis; thiamine diphosphate biosynthesis; 4-methyl-5-(2-phosphoethyl)-thiazole from 5-(2-hydroxyethyl)-4-methylthiazole: step 1/1. Catalyzes the phosphorylation of the hydroxyl group of 4-methyl-5-beta-hydroxyethylthiazole (THZ). In Clostridium acetobutylicum (strain ATCC 824 / DSM 792 / JCM 1419 / IAM 19013 / LMG 5710 / NBRC 13948 / NRRL B-527 / VKM B-1787 / 2291 / W), this protein is Hydroxyethylthiazole kinase.